The primary structure comprises 152 residues: MTSTVKTPLPAVDDLAPQWYVIDAADQRLGRLAAEIARILRGKNKAIYTPHMDTGDFVIVINAEKVTVTGKKRSQKLYRRHSGRPGGMKIETFDQLQARIPERIIEHAVKGMLPKNSLGRKLFTKLKVYAGPEHPHQAQKPQPLTINTIPGA.

The tract at residues 133–152 (EHPHQAQKPQPLTINTIPGA) is disordered. Positions 139-152 (QKPQPLTINTIPGA) are enriched in polar residues.

The protein belongs to the universal ribosomal protein uL13 family. Part of the 50S ribosomal subunit.

This protein is one of the early assembly proteins of the 50S ribosomal subunit, although it is not seen to bind rRNA by itself. It is important during the early stages of 50S assembly. This Thermosynechococcus vestitus (strain NIES-2133 / IAM M-273 / BP-1) protein is Large ribosomal subunit protein uL13.